The following is an 87-amino-acid chain: Exodeoxyribonuclease 7 small subunit (87 aa).

It belongs to the XseB family. As to quaternary structure, heterooligomer composed of large and small subunits.

Its subcellular location is the cytoplasm. The enzyme catalyses Exonucleolytic cleavage in either 5'- to 3'- or 3'- to 5'-direction to yield nucleoside 5'-phosphates.. Functionally, bidirectionally degrades single-stranded DNA into large acid-insoluble oligonucleotides, which are then degraded further into small acid-soluble oligonucleotides. The protein is Exodeoxyribonuclease 7 small subunit of Pelotomaculum thermopropionicum (strain DSM 13744 / JCM 10971 / SI).